The primary structure comprises 390 residues: Phosphoglycerate kinase (390 aa).

Substrate is bound by residues 21–23, R36, 59–62, R113, and R146; these read DMN and HLGR. Residues K197, E319, and 345–348 contribute to the ATP site; that span reads GGDT.

Belongs to the phosphoglycerate kinase family. As to quaternary structure, monomer.

It localises to the cytoplasm. The catalysed reaction is (2R)-3-phosphoglycerate + ATP = (2R)-3-phospho-glyceroyl phosphate + ADP. It functions in the pathway carbohydrate degradation; glycolysis; pyruvate from D-glyceraldehyde 3-phosphate: step 2/5. The protein is Phosphoglycerate kinase of Laribacter hongkongensis (strain HLHK9).